Consider the following 810-residue polypeptide: LPS-assembly protein LptD (810 aa).

The first 29 residues, 1–29 (MTKRTLGYSYPIALTISLVPALTPAIVQA), serve as a signal peptide directing secretion.

The protein belongs to the LptD family. In terms of assembly, component of the lipopolysaccharide transport and assembly complex. Interacts with LptE and LptA.

The protein localises to the cell outer membrane. Its function is as follows. Together with LptE, is involved in the assembly of lipopolysaccharide (LPS) at the surface of the outer membrane. The sequence is that of LPS-assembly protein LptD from Aeromonas hydrophila subsp. hydrophila (strain ATCC 7966 / DSM 30187 / BCRC 13018 / CCUG 14551 / JCM 1027 / KCTC 2358 / NCIMB 9240 / NCTC 8049).